The primary structure comprises 87 residues: Large ribosomal subunit protein bL27 (87 aa).

The disordered stretch occupies residues 1 to 25 (MAHKKGASSSRNGRDSNAQRLGVKR). Over residues 7–19 (ASSSRNGRDSNAQ) the composition is skewed to polar residues.

It belongs to the bacterial ribosomal protein bL27 family.

In Rhodococcus opacus (strain B4), this protein is Large ribosomal subunit protein bL27.